Consider the following 188-residue polypeptide: UPF0200 protein M164_1169 (188 aa).

15–22 (GMPGSGKS) lines the ATP pocket.

It belongs to the UPF0200 family.

The sequence is that of UPF0200 protein M164_1169 from Saccharolobus islandicus (strain M.16.4 / Kamchatka #3) (Sulfolobus islandicus).